The sequence spans 106 residues: HIG1 domain family member 2A, mitochondrial (106 aa).

A2 carries the post-translational modification N-acetylalanine. Residues 20–106 (VIEGLSPTVY…LAVTAMKSRP (87 aa)) enclose the HIG1 domain. The next 2 membrane-spanning stretches (helical) occupy residues 47–67 (PVVP…LYSF) and 83–103 (IAAQ…TAMK). Over 104–106 (SRP) the chain is Mitochondrial matrix.

In terms of assembly, associates with cytochrome c oxidase (COX, complex IV); proposed complex component.

The protein localises to the mitochondrion membrane. It localises to the mitochondrion inner membrane. Proposed subunit of cytochrome c oxidase (COX, complex IV), which is the terminal component of the mitochondrial respiratory chain that catalyzes the reduction of oxygen to water. May be involved in cytochrome c oxidase activity. May play a role in the assembly of respiratory supercomplexes. The sequence is that of HIG1 domain family member 2A, mitochondrial (HIGD2A) from Homo sapiens (Human).